The following is an 805-amino-acid chain: Leucine--tRNA ligase (805 aa).

A 'HIGH' region motif is present at residues 40–51 (PYPSGQGLHVGH). The short motif at 577–581 (KMSKS) is the 'KMSKS' region element. Residue Lys580 participates in ATP binding.

It belongs to the class-I aminoacyl-tRNA synthetase family.

It localises to the cytoplasm. The enzyme catalyses tRNA(Leu) + L-leucine + ATP = L-leucyl-tRNA(Leu) + AMP + diphosphate. The sequence is that of Leucine--tRNA ligase from Limosilactobacillus fermentum (strain NBRC 3956 / LMG 18251) (Lactobacillus fermentum).